Reading from the N-terminus, the 266-residue chain is Orotidine 5'-phosphate decarboxylase (266 aa).

Substrate is bound by residues Asp38, 60 to 62 (KTH), 92 to 101 (DRKFADIGNT), Tyr218, and Arg236. Lys94 acts as the Proton donor in catalysis.

This sequence belongs to the OMP decarboxylase family.

The catalysed reaction is orotidine 5'-phosphate + H(+) = UMP + CO2. Its pathway is pyrimidine metabolism; UMP biosynthesis via de novo pathway; UMP from orotate: step 2/2. This is Orotidine 5'-phosphate decarboxylase (URA3) from Candida maltosa (Yeast).